We begin with the raw amino-acid sequence, 202 residues long: 3-isopropylmalate dehydratase small subunit (202 aa).

This sequence belongs to the LeuD family. LeuD type 1 subfamily. In terms of assembly, heterodimer of LeuC and LeuD.

The catalysed reaction is (2R,3S)-3-isopropylmalate = (2S)-2-isopropylmalate. It functions in the pathway amino-acid biosynthesis; L-leucine biosynthesis; L-leucine from 3-methyl-2-oxobutanoate: step 2/4. Catalyzes the isomerization between 2-isopropylmalate and 3-isopropylmalate, via the formation of 2-isopropylmaleate. This Paenarthrobacter aurescens (strain TC1) protein is 3-isopropylmalate dehydratase small subunit.